The chain runs to 192 residues: Putative acetyltransferase SH0499 (192 aa).

The protein belongs to the transferase hexapeptide repeat family.

This chain is Putative acetyltransferase SH0499, found in Staphylococcus haemolyticus (strain JCSC1435).